The sequence spans 337 residues: DNA-directed RNA polymerase subunit alpha (337 aa).

The alpha N-terminal domain (alpha-NTD) stretch occupies residues 1 to 233; it reads MIQKNWQELI…DQLAIFVNFE (233 aa). Residues 249-337 form an alpha C-terminal domain (alpha-CTD) region; that stretch reads FNPALLKKVD…DLAKRYEDQY (89 aa).

This sequence belongs to the RNA polymerase alpha chain family. In terms of assembly, homodimer. The RNAP catalytic core consists of 2 alpha, 1 beta, 1 beta' and 1 omega subunit. When a sigma factor is associated with the core the holoenzyme is formed, which can initiate transcription.

It catalyses the reaction RNA(n) + a ribonucleoside 5'-triphosphate = RNA(n+1) + diphosphate. DNA-dependent RNA polymerase catalyzes the transcription of DNA into RNA using the four ribonucleoside triphosphates as substrates. This Brucella anthropi (strain ATCC 49188 / DSM 6882 / CCUG 24695 / JCM 21032 / LMG 3331 / NBRC 15819 / NCTC 12168 / Alc 37) (Ochrobactrum anthropi) protein is DNA-directed RNA polymerase subunit alpha.